A 100-amino-acid polypeptide reads, in one-letter code: MNLTPREKDKLLVAMAAEVARKRLARGVKLNHPEAIALITDAVVEGARDGRSVAEMMQAGAEVITRDQCMSGVAEMIHEVQVEATFPDGTKLVTVHNPIR.

Belongs to the urease gamma subunit family. As to quaternary structure, heterotrimer of UreA (gamma), UreB (beta) and UreC (alpha) subunits. Three heterotrimers associate to form the active enzyme.

It is found in the cytoplasm. It catalyses the reaction urea + 2 H2O + H(+) = hydrogencarbonate + 2 NH4(+). It participates in nitrogen metabolism; urea degradation; CO(2) and NH(3) from urea (urease route): step 1/1. The sequence is that of Urease subunit gamma from Ruegeria sp. (strain TM1040) (Silicibacter sp.).